The following is a 55-amino-acid chain: Conotoxin Cal22d (55 aa).

Residues Gly1–Ala5 constitute a propeptide that is removed on maturation.

In terms of processing, contains 4 disulfide bonds. As to expression, expressed by the venom duct.

It localises to the secreted. Probable neurotoxin with unknown target. Possibly targets ion channels. This is Conotoxin Cal22d from Californiconus californicus (California cone).